The primary structure comprises 383 residues: ATP phosphoribosyltransferase regulatory subunit (383 aa).

This sequence belongs to the class-II aminoacyl-tRNA synthetase family. HisZ subfamily. As to quaternary structure, heteromultimer composed of HisG and HisZ subunits.

The protein localises to the cytoplasm. The protein operates within amino-acid biosynthesis; L-histidine biosynthesis; L-histidine from 5-phospho-alpha-D-ribose 1-diphosphate: step 1/9. Required for the first step of histidine biosynthesis. May allow the feedback regulation of ATP phosphoribosyltransferase activity by histidine. The polypeptide is ATP phosphoribosyltransferase regulatory subunit (Neisseria gonorrhoeae (strain ATCC 700825 / FA 1090)).